Consider the following 229-residue polypeptide: Large ribosomal subunit protein uL4 (229 aa).

The tract at residues Ser-62–Val-103 is disordered. Residues Lys-82 to Arg-97 show a composition bias toward basic residues.

It belongs to the universal ribosomal protein uL4 family. Part of the 50S ribosomal subunit.

In terms of biological role, one of the primary rRNA binding proteins, this protein initially binds near the 5'-end of the 23S rRNA. It is important during the early stages of 50S assembly. It makes multiple contacts with different domains of the 23S rRNA in the assembled 50S subunit and ribosome. Forms part of the polypeptide exit tunnel. This Mycoplasmopsis synoviae (strain 53) (Mycoplasma synoviae) protein is Large ribosomal subunit protein uL4.